The primary structure comprises 245 residues: Leucyl/phenylalanyl-tRNA--protein transferase (245 aa).

It belongs to the L/F-transferase family.

It is found in the cytoplasm. The enzyme catalyses N-terminal L-lysyl-[protein] + L-leucyl-tRNA(Leu) = N-terminal L-leucyl-L-lysyl-[protein] + tRNA(Leu) + H(+). It catalyses the reaction N-terminal L-arginyl-[protein] + L-leucyl-tRNA(Leu) = N-terminal L-leucyl-L-arginyl-[protein] + tRNA(Leu) + H(+). It carries out the reaction L-phenylalanyl-tRNA(Phe) + an N-terminal L-alpha-aminoacyl-[protein] = an N-terminal L-phenylalanyl-L-alpha-aminoacyl-[protein] + tRNA(Phe). Functions in the N-end rule pathway of protein degradation where it conjugates Leu, Phe and, less efficiently, Met from aminoacyl-tRNAs to the N-termini of proteins containing an N-terminal arginine or lysine. This is Leucyl/phenylalanyl-tRNA--protein transferase from Paraburkholderia phytofirmans (strain DSM 17436 / LMG 22146 / PsJN) (Burkholderia phytofirmans).